Here is a 283-residue protein sequence, read N- to C-terminus: Tetrahydroxynaphthalene reductase (283 aa).

Residues 1–21 form a disordered region; that stretch reads MPAVTQPRGESKYDAIPGPLG. 39–63 provides a ligand contact to NADP(+); that stretch reads RGIGREMAMELGRRGCKVIVNYANS. Serine 164 serves as a coordination point for substrate. Tyrosine 178 functions as the Proton acceptor in the catalytic mechanism.

The protein belongs to the short-chain dehydrogenases/reductases (SDR) family. Homotetramer.

The catalysed reaction is scytalone + NADP(+) = naphthalene-1,3,6,8-tetrol + NADPH + H(+). It functions in the pathway pigment biosynthesis; melanin biosynthesis. Functionally, catalyzes the NADPH-dependent reduction of 1,3,6,8-tetrahydroxynaphthalene (T4HN) into (+)-scytalone and 1,3,8-trihydroxynaphthalene into (-)-vermelone. This enzyme is the biochemical target of several commercially important fungicides which are used to prevent blast disease in rice plants. This chain is Tetrahydroxynaphthalene reductase, found in Pyricularia oryzae (strain 70-15 / ATCC MYA-4617 / FGSC 8958) (Rice blast fungus).